The sequence spans 181 residues: MNSRSGYIHIILGPMFSGKSTELIRLLKRYQVAMYTCLVIKYSKDERYGRGLVTHDNDSVPAIPVNSLNEINCNDINADVIGIDEGQFFPDIVEFCDYMANNGKILIVAALDGTFLRQPFGNILNLIPRAEYVLKLTAVCMICFGSASFSKRISDEQEIEIIGGKEKYQSVCRVCYFKINN.

13-20 serves as a coordination point for ATP; it reads GPMFSGKS. Glu85 acts as the Proton acceptor in catalysis. Phe115 lines the substrate pocket. Zn(2+)-binding residues include Cys140 and Cys143. 159–163 contributes to the substrate binding site; it reads IEIIG. Positions 172 and 175 each coordinate Zn(2+).

The protein belongs to the thymidine kinase family.

The enzyme catalyses thymidine + ATP = dTMP + ADP + H(+). This is Thymidine kinase (TK) from Yaba monkey tumor virus (strain VR587) (YMTV).